The chain runs to 223 residues: Ribosomal RNA small subunit methyltransferase G (223 aa).

Positions 85, 90, and 154 each coordinate S-adenosyl-L-methionine.

This sequence belongs to the methyltransferase superfamily. RNA methyltransferase RsmG family.

It is found in the cytoplasm. It catalyses the reaction guanosine(527) in 16S rRNA + S-adenosyl-L-methionine = N(7)-methylguanosine(527) in 16S rRNA + S-adenosyl-L-homocysteine. Functionally, specifically methylates the N7 position of guanine in position 527 of 16S rRNA. This is Ribosomal RNA small subunit methyltransferase G from Rhodopseudomonas palustris (strain ATCC BAA-98 / CGA009).